Reading from the N-terminus, the 297-residue chain is Transcription factor MYB1R1 (297 aa).

The segment at 44-96 (DLSQYEHPNANNNNNGGDNNESSKVAQDEGYASADDAVQHQSNSGRERKRGVP) is disordered. Positions 52-63 (NANNNNNGGDNN) are enriched in low complexity. The region spanning 89–145 (RERKRGVPWTEEEHKLFLLGLQKVGKGDWRGISRNFVKTRTPTQVASHAQKYFLRRS) is the HTH myb-type domain. A DNA-binding region (H-T-H motif) is located at residues 117-141 (WRGISRNFVKTRTPTQVASHAQKYF).

The protein localises to the nucleus. Its subcellular location is the cytoplasm. It is found in the cytosol. Its function is as follows. Binds selectively to the DNA sequence 5'-[GA]GATAA-3' and may act as a transcription factor involved in the regulation of drought-responsive genes. Enhances stomatal closure in response to abscisic acid (ABA). Confers drought and salt tolerance. The chain is Transcription factor MYB1R1 from Solanum tuberosum (Potato).